Here is a 181-residue protein sequence, read N- to C-terminus: Squamosa promoter-binding-like protein 5 (181 aa).

Basic residues predominate over residues 1 to 10; that stretch reads MEGQRTQRRG. A disordered region spans residues 1–58; the sequence is MEGQRTQRRGYLKDKATVSNLVEEEMENGMDGEEEDGGDEDKRKKVMERVRGPSTDRV. The span at 22–39 shows a compositional bias: acidic residues; sequence VEEEMENGMDGEEEDGGD. Residues 40 to 51 are compositionally biased toward basic and acidic residues; it reads EDKRKKVMERVR. Residues 60 to 137 form an SBP-type zinc finger; sequence SRLCQVDRCT…AGHNERRRKI (78 aa). Zn(2+) is bound by residues cysteine 63, cysteine 68, cysteine 85, histidine 88, cysteine 104, cysteine 107, histidine 111, and cysteine 123. The Bipartite nuclear localization signal motif lies at 120–136; sequence KRSCRRRLAGHNERRRK. The disordered stretch occupies residues 128–181; that stretch reads AGHNERRRKISGDSFGEGSGRRGFSGQLIQTQERNRVDRKLPMTNSSFKRPQIR. Over residues 170–181 the composition is skewed to polar residues; sequence MTNSSFKRPQIR.

Requires Zn(2+) as cofactor. As to expression, expressed in the inflorescence apical meristem and young flowers.

The protein localises to the nucleus. The protein resides in the cytoplasm. Functionally, trans-acting factor that binds specifically to the consensus nucleotide sequence 5'-TNCGTACAA-3' of AP1 promoter. Promotes both vegetative phase change and flowering. This is Squamosa promoter-binding-like protein 5 (SPL5) from Arabidopsis thaliana (Mouse-ear cress).